The following is a 545-amino-acid chain: Chaperonin GroEL (545 aa).

ATP is bound by residues 29 to 32 (TMGP), Lys-50, 86 to 90 (DGTTT), Gly-414, 477 to 479 (DAA), and Asp-493.

Belongs to the chaperonin (HSP60) family. Forms a cylinder of 14 subunits composed of two heptameric rings stacked back-to-back. Interacts with the co-chaperonin GroES.

The protein localises to the cytoplasm. It catalyses the reaction ATP + H2O + a folded polypeptide = ADP + phosphate + an unfolded polypeptide.. Together with its co-chaperonin GroES, plays an essential role in assisting protein folding. The GroEL-GroES system forms a nano-cage that allows encapsulation of the non-native substrate proteins and provides a physical environment optimized to promote and accelerate protein folding. In Campylobacter jejuni subsp. jejuni serotype O:6 (strain 81116 / NCTC 11828), this protein is Chaperonin GroEL.